Reading from the N-terminus, the 608-residue chain is V-type ATP synthase subunit I (608 aa).

9 helical membrane passes run 308–325, 327–346, 356–376, 405–425, 438–458, 464–484, 495–515, 517–537, and 550–570; these read ISFIFMLFFFVFFGMIIG, AAYGVIFFLIGILLSLSFLL, GLIFYLSVSSILYGAMTGTWF, IIFICFSIGVLQISLAHVWNF, IAQIGWLMCIVGLYYLVLNLI, FPMYNVVYNVIYFGVALVFVF, CILKSFGGIIEQFLTTVSGFA, IISYIRLFAVGLAGLSISASF, and IGLIVAGIIVILFGHVLNIML.

The protein belongs to the V-ATPase 116 kDa subunit family.

Its subcellular location is the cell membrane. Produces ATP from ADP in the presence of a proton gradient across the membrane. In Borreliella burgdorferi (strain ATCC 35210 / DSM 4680 / CIP 102532 / B31) (Borrelia burgdorferi), this protein is V-type ATP synthase subunit I (atpI).